Consider the following 438-residue polypeptide: NADH-quinone oxidoreductase subunit D (438 aa).

It belongs to the complex I 49 kDa subunit family. NDH-1 is composed of 14 different subunits. Subunits NuoB, C, D, E, F, and G constitute the peripheral sector of the complex.

The protein resides in the cell membrane. It carries out the reaction a quinone + NADH + 5 H(+)(in) = a quinol + NAD(+) + 4 H(+)(out). Functionally, NDH-1 shuttles electrons from NADH, via FMN and iron-sulfur (Fe-S) centers, to quinones in the respiratory chain. The immediate electron acceptor for the enzyme in this species is believed to be a menaquinone. Couples the redox reaction to proton translocation (for every two electrons transferred, four hydrogen ions are translocated across the cytoplasmic membrane), and thus conserves the redox energy in a proton gradient. The polypeptide is NADH-quinone oxidoreductase subunit D (Rhodococcus jostii (strain RHA1)).